The primary structure comprises 2919 residues: Cadherin EGF LAG seven-pass G-type receptor 2 (2919 aa).

The N-terminal stretch at 1–31 is a signal peptide; it reads MRSRAASAPLPTPLLPLLLLLLLLPPSPLLG. The Extracellular portion of the chain corresponds to 32 to 2380; sequence DQVGPCRSLG…GEILPLKTLT (2349 aa). The disordered stretch occupies residues 156 to 194; that stretch reads LRAGEGSPEESLGGRRKRNVNTAPQFQPPSYQATVPENQ. The span at 175 to 194 shows a compositional bias: polar residues; that stretch reads VNTAPQFQPPSYQATVPENQ. Cadherin domains lie at 182 to 289, 290 to 399, 400 to 505, 506 to 610, 611 to 712, 713 to 815, 816 to 921, 922 to 1023, and 1028 to 1146; these read QPPS…DPVF, EQQE…APQF, SEKR…APIF, VSTP…NPTF, TQPE…RPVF, QSSH…APQF, LRDS…PPVF, EQDE…PPVL, and ILFN…SPLL. N-linked (GlcNAc...) asparagine glycosylation is found at asparagine 486, asparagine 557, and asparagine 701. Residues asparagine 1036, asparagine 1076, asparagine 1182, and asparagine 1212 are each glycosylated (N-linked (GlcNAc...) asparagine). In terms of domain architecture, EGF-like 1; atypical spans 1228–1286; it reads DDNICLREPCENYMRCVSVLRFDSSAPFIASSSVLFRPIHPVGGLRCRCPPGFTGDYCE. The EGF-like 2; calcium-binding domain maps to 1288–1318; the sequence is EVDLCYSRPCGPHGRCRSREGGYTCLCLDGY. 6 disulfides stabilise this stretch: cysteine 1292–cysteine 1303, cysteine 1297–cysteine 1312, cysteine 1314–cysteine 1323, cysteine 1332–cysteine 1343, cysteine 1337–cysteine 1353, and cysteine 1355–cysteine 1365. Residues 1328–1366 form the EGF-like 3; calcium-binding domain; sequence HSGRCTPGVCKNGGTCVNLLVGGFKCDCPSGDFEKPFCQ. Residues 1367–1571 form the Laminin G-like 1 domain; the sequence is VTTRSFPARS…IANNGTVPGC (205 aa). Residues asparagine 1501 and asparagine 1565 are each glycosylated (N-linked (GlcNAc...) asparagine). 4 disulfides stabilise this stretch: cysteine 1545–cysteine 1571, cysteine 1578–cysteine 1589, cysteine 1583–cysteine 1598, and cysteine 1600–cysteine 1609. Residues 1574 to 1610 form the EGF-like 4; calcium-binding domain; sequence KKIVCDSSICHNGGTCVNQWNAFSCECPLGFGGKSCA. (3R)-3-hydroxyasparagine is present on asparagine 1591. Residues 1614–1791 form the Laminin G-like 2 domain; the sequence is ANPQRFLGSS…GESINVEPGC (178 aa). Residue asparagine 1741 is glycosylated (N-linked (GlcNAc...) asparagine). The region spanning 1787–1829 is the EGF-like 5; calcium-binding domain; the sequence is VEPGCSWPDPCDSNPCPTNSYCSNDWDSYSCSCVLGYYGDNCT. 13 cysteine pairs are disulfide-bonded: cysteine 1791–cysteine 1802, cysteine 1797–cysteine 1817, cysteine 1819–cysteine 1828, cysteine 1832–cysteine 1843, cysteine 1837–cysteine 1855, cysteine 1857–cysteine 1866, cysteine 1887–cysteine 1899, cysteine 1889–cysteine 1906, cysteine 1908–cysteine 1921, cysteine 1924–cysteine 1936, cysteine 1926–cysteine 1943, cysteine 1945–cysteine 1954, and cysteine 1957–cysteine 1969. Residue asparagine 1827 is glycosylated (N-linked (GlcNAc...) asparagine). Positions 1830-1867 constitute an EGF-like 6; calcium-binding domain; sequence NVCDLNPCEHQSVCTRKPNTPHGYICECLPNYLGPYCE. The 40-residue stretch at 1883-1922 folds into the EGF-like 7; calcium-binding domain; sequence TCGPCNCDVSKGFDPDCNKTSGECHCKENHYRPPGSPTCL. The N-linked (GlcNAc...) asparagine glycan is linked to asparagine 1900. The Laminin EGF-like domain occupies 1924-1971; the sequence is CDCYPTGSLSRVCDPEDGQCPCKPGVIGRQCDRCDNPFAEVTTNGCEV. Asparagine 2024, asparagine 2043, and asparagine 2061 each carry an N-linked (GlcNAc...) asparagine glycan. A GAIN-B domain is found at 2199–2369; that stretch reads ETTVILPESV…AVLMDMSRRE (171 aa). Residues 2216 to 2241 are disordered; it reads VRSAGPGEAQETEELARRQRRHPELS. 2 disulfides stabilise this stretch: cysteine 2319/cysteine 2351 and cysteine 2339/cysteine 2353. A GPS region spans residues 2319–2369; sequence CVFWNHSILVSGTGGWSARGCEVVFRNESHVSCQCNHMTSFAVLMDMSRRE. N-linked (GlcNAc...) asparagine glycosylation is found at asparagine 2323 and asparagine 2345. The helical transmembrane segment at 2381–2401 threads the bilayer; sequence YVALGVTLAALMLTFLFLTLL. The Cytoplasmic segment spans residues 2402 to 2413; the sequence is RALRSNQHGIRR. The helical transmembrane segment at 2414–2433 threads the bilayer; sequence NLTAALGLAQLVFLLGINQA. Residues 2434-2438 lie on the Extracellular side of the membrane; that stretch reads DLPFA. The helical transmembrane segment at 2439–2459 threads the bilayer; sequence CTVIAILLHFLYLCTFSWALL. Topologically, residues 2460–2480 are cytoplasmic; the sequence is EALHLYRALTEVRDVNASPMR. Residues 2481 to 2501 traverse the membrane as a helical segment; sequence FYYMLGWGVPAFITGLAVGLD. The Extracellular segment spans residues 2502-2518; it reads PEGYGNPDFCWLSVYDT. The chain crosses the membrane as a helical span at residues 2519-2539; that stretch reads LIWSFAGPVAFAVSMSVFLYI. The Cytoplasmic portion of the chain corresponds to 2540–2563; sequence LSARASCAAQRQGFEKKGPVSGLR. A helical transmembrane segment spans residues 2564–2584; sequence SSFTVLLLLSATWLLALLSVN. The Extracellular portion of the chain corresponds to 2585–2591; it reads SDTLLFH. A helical membrane pass occupies residues 2592–2612; it reads YLFAACNCVQGPFIFLSYVVL. Residues 2613 to 2919 are Cytoplasmic-facing; that stretch reads SKEVRKALKF…SEFLFFNFLH (307 aa). The interval 2690–2884 is disordered; it reads LNPGQVPPGL…PPRPPPRQSL (195 aa). Residues 2718 to 2730 are compositionally biased toward acidic residues; that stretch reads TDSDSDLSLEDDQ. Residues 2791–2800 are compositionally biased toward polar residues; sequence GTTTKENSGS. Residues 2803 to 2815 are compositionally biased toward basic and acidic residues; that stretch reads LEERPRENGDALT. A compositionally biased stretch (low complexity) spans 2857-2868; that stretch reads GTGSSRGSSISE.

This sequence belongs to the G-protein coupled receptor 2 family. LN-TM7 subfamily. In terms of assembly, heterodimer of 2 chains generated by proteolytic processing; the large extracellular N-terminal fragment and the membrane-bound C-terminal fragment predominantly remain associated and non-covalently linked. Post-translationally, the iron and 2-oxoglutarate dependent 3-hydroxylation of aspartate and asparagine is (R) stereospecific within EGF domains. Autoproteolytically processed at the GPS region of the GAIN-B domain; this cleavage modulates receptor activity. Expressed in the CNS and in the eye.

The protein localises to the cell membrane. Receptor that may have an important role in cell/cell signaling during nervous system formation. This is Cadherin EGF LAG seven-pass G-type receptor 2 from Mus musculus (Mouse).